We begin with the raw amino-acid sequence, 375 residues long: MDIEERINLVLKKPTEEVLTVENLRHLFEIGAPLQHYIGFEISGYIHLGTGLMAGAKIADFQKAGIKTRVFLADWHSWINDKLGGDLEVIQEVALKYFKVGMEKSIEVMGGDPKKVEFVLASEILEKGDYWQTVIDISKNVTLSRVMRSITIMGRQMGEAIDFAKLIYPMMQVADIFYQGVTIAHAGMDQRKAHVIAIEVAQKLRYHPIVHEGEKLKPVAVHHHLLLGLQEPPKWPIESEEEFKEIKAQMKMSKSKPYSAVFIHDSPEEIRQKLRKAFCPAREVRYNPVLDWVEYIIFREEPTEFTVHRPAKFGGDVTYTTFEELKRDFAEGKLHPLDLKNAVAEYLINLLEPIRRYFEKHPEPLELMRSVKITR.

Residues Tyr37, Tyr168, Gln172, Asp175, and Gln190 each contribute to the L-tyrosine site. The 'KMSKS' region signature appears at 251–255 (KMSKS). Lys254 contacts ATP.

The protein belongs to the class-I aminoacyl-tRNA synthetase family. TyrS type 4 subfamily. In terms of assembly, homodimer.

Its subcellular location is the cytoplasm. It carries out the reaction tRNA(Tyr) + L-tyrosine + ATP = L-tyrosyl-tRNA(Tyr) + AMP + diphosphate + H(+). Its function is as follows. Catalyzes the attachment of tyrosine to tRNA(Tyr) in a two-step reaction: tyrosine is first activated by ATP to form Tyr-AMP and then transferred to the acceptor end of tRNA(Tyr). This is Tyrosine--tRNA ligase from Pyrococcus horikoshii (strain ATCC 700860 / DSM 12428 / JCM 9974 / NBRC 100139 / OT-3).